A 97-amino-acid chain; its full sequence is Type 1 phosphatases regulator YPI2 (97 aa).

The tract at residues 1–97 (MNKKKTKICC…KMMEKKSNNT (97 aa)) is disordered. Over residues 43 to 53 (ENDKDLGFDER) the composition is skewed to basic and acidic residues. Over residues 54–65 (RKRRVERRRRKL) the composition is skewed to basic residues.

Belongs to the YPI1 family.

It is found in the nucleus. In terms of biological role, regulator of type 1 phosphatases which maintains protein phosphatase activity under strict control. The sequence is that of Type 1 phosphatases regulator YPI2 (YPI2) from Vanderwaltozyma polyspora (strain ATCC 22028 / DSM 70294 / BCRC 21397 / CBS 2163 / NBRC 10782 / NRRL Y-8283 / UCD 57-17) (Kluyveromyces polysporus).